The chain runs to 82 residues: Large ribosomal subunit protein uL24c (82 aa).

It belongs to the universal ribosomal protein uL24 family. In terms of assembly, part of the 50S ribosomal subunit.

Its subcellular location is the plastid. It localises to the chloroplast. Functionally, one of two assembly initiator proteins, it binds directly to the 5'-end of the 23S rRNA, where it nucleates assembly of the 50S subunit. This chain is Large ribosomal subunit protein uL24c (rpl24), found in Phaeodactylum tricornutum (strain CCAP 1055/1).